A 155-amino-acid chain; its full sequence is Endoribonuclease YbeY (155 aa).

The Zn(2+) site is built by H120, H124, and H130.

It belongs to the endoribonuclease YbeY family. Zn(2+) serves as cofactor.

The protein localises to the cytoplasm. Its function is as follows. Single strand-specific metallo-endoribonuclease involved in late-stage 70S ribosome quality control and in maturation of the 3' terminus of the 16S rRNA. The chain is Endoribonuclease YbeY from Staphylococcus epidermidis (strain ATCC 12228 / FDA PCI 1200).